Reading from the N-terminus, the 287-residue chain is ATP synthase gamma chain (287 aa).

The protein belongs to the ATPase gamma chain family. As to quaternary structure, F-type ATPases have 2 components, CF(1) - the catalytic core - and CF(0) - the membrane proton channel. CF(1) has five subunits: alpha(3), beta(3), gamma(1), delta(1), epsilon(1). CF(0) has three main subunits: a, b and c.

It is found in the cell inner membrane. Functionally, produces ATP from ADP in the presence of a proton gradient across the membrane. The gamma chain is believed to be important in regulating ATPase activity and the flow of protons through the CF(0) complex. In Baumannia cicadellinicola subsp. Homalodisca coagulata, this protein is ATP synthase gamma chain.